The sequence spans 193 residues: Putative deoxynucleotide monophosphate kinase (193 aa).

Lysine 10 lines the dGMP pocket. ATP-binding residues include glycine 13 and threonine 16. DGMP is bound by residues leucine 36, lysine 37, lysine 58, aspartate 122, arginine 124, glutamate 128, and serine 155.

It belongs to the dNMP kinase family.

The catalysed reaction is a 2'-deoxyribonucleoside 5'-phosphate + ATP = a 2'-deoxyribonucleoside 5'-diphosphate + ADP. This chain is Putative deoxynucleotide monophosphate kinase, found in Acanthamoeba polyphaga mimivirus (APMV).